A 432-amino-acid chain; its full sequence is Ornithine decarboxylase (432 aa).

N6-(pyridoxal phosphate)lysine is present on K98. Pyridoxal 5'-phosphate-binding positions include S229, G266, and 296 to 299; that span reads EPGR. 341–342 contributes to the substrate binding site; it reads FD. The Proton donor; shared with dimeric partner role is filled by C377. Residue D378 coordinates substrate. Y407 contacts pyridoxal 5'-phosphate.

Belongs to the Orn/Lys/Arg decarboxylase class-II family. Homodimer. Only the dimer is catalytically active, as the active sites are constructed of residues from both monomers. Pyridoxal 5'-phosphate serves as cofactor.

The protein resides in the cytoplasm. It catalyses the reaction L-ornithine + H(+) = putrescine + CO2. The protein operates within amine and polyamine biosynthesis; putrescine biosynthesis via L-ornithine pathway; putrescine from L-ornithine: step 1/1. With respect to regulation, inhibited by antizyme (AZ) OAZ1 in response to polyamine levels. AZ inhibits the assembly of the functional homodimer by binding to ODC monomers and targeting them for ubiquitin-independent proteolytic destruction by the 26S proteasome. Catalyzes the first and rate-limiting step of polyamine biosynthesis that converts ornithine into putrescine, which is the precursor for the polyamines, spermidine and spermine. Polyamines are essential for cell proliferation and are implicated in cellular processes, ranging from DNA replication to apoptosis. The protein is Ornithine decarboxylase (spe1) of Schizosaccharomyces pombe (strain 972 / ATCC 24843) (Fission yeast).